The primary structure comprises 488 residues: Glutamyl-tRNA(Gln) amidotransferase subunit A (488 aa).

Active-site charge relay system residues include lysine 77 and serine 152. Serine 176 functions as the Acyl-ester intermediate in the catalytic mechanism.

This sequence belongs to the amidase family. GatA subfamily. As to quaternary structure, heterotrimer of A, B and C subunits.

It carries out the reaction L-glutamyl-tRNA(Gln) + L-glutamine + ATP + H2O = L-glutaminyl-tRNA(Gln) + L-glutamate + ADP + phosphate + H(+). Its function is as follows. Allows the formation of correctly charged Gln-tRNA(Gln) through the transamidation of misacylated Glu-tRNA(Gln) in organisms which lack glutaminyl-tRNA synthetase. The reaction takes place in the presence of glutamine and ATP through an activated gamma-phospho-Glu-tRNA(Gln). This chain is Glutamyl-tRNA(Gln) amidotransferase subunit A, found in Streptococcus agalactiae serotype III (strain NEM316).